A 920-amino-acid polypeptide reads, in one-letter code: Anillin-related medial ring protein mid1 (920 aa).

Residues 1 to 452 form a disordered region; the sequence is MKEQEFSYRE…LSSEDLRHPS (452 aa). Phosphoserine occurs at positions 15 and 24. Thr34 bears the Phosphothreonine mark. A phosphoserine mark is found at Ser46 and Ser62. A Nuclear export sequence (NES) 1 motif is present at residues 69-81; sequence LNVATDLLESLDL. A Phosphoserine modification is found at Ser95. Polar residues predominate over residues 461 to 481; sequence RTYSNYCENEPNKSSQSLVSS. At Ser531 the chain carries Phosphoserine. Positions 538-561 are disordered; that stretch reads DLPSQDKSTSYEVPNGTENQSPRP. Over residues 542 to 561 the composition is skewed to polar residues; sequence QDKSTSYEVPNGTENQSPRP. The interval 551–920 is cryptic lipid-binding C2 domain; sequence PNGTENQSPR…WLQEYVNFMA (370 aa). The Nuclear localization sequence (NLS) motif lies at 681-710; it reads RKFFDKLFNRRKKRKLNKAAAVENSKAKKS. Positions 763–773 match the Nuclear export sequence (NES) 2 motif; that stretch reads LGNLTLTCLYI. Positions 802–901 constitute a PH domain; that stretch reads LYNEGYLYRL…WLQVMNSRSF (100 aa).

Homodimer. Interacts with blt1 and cdr2. Interacts with gef2. Interacts with plo1 and rng2. Interacts with fhk2 and sep1. Interacts with clp1. In terms of processing, phosphorylated. At the onset of mitosis, becomes hyperphosphorylated, leaves the nucleus, and forms a medial ring. Phosphorylation by plo1 and other kinases may contribute to solubilizing mid1 for export from the nucleus. Phosphorylation by sid2 drives removal from the cortex at the actomyosin contractile ring constriction onset.

It localises to the nucleus. It is found in the cytoplasm. The protein resides in the cell cortex. Its subcellular location is the cytoskeleton. Its function is as follows. Scaffold protein that anchors the contractile ring (CR) at the cell equator during cytokinesis. At the onset of mitosis, membrane-bound oligomers of mid1 assemble recruitment platforms for cytokinetic ring components at the medial cortex and stabilize the ring position during its compaction. Recruits dephosphorylated myo2, but also rng2, clp1 and cdc15 to nodes and to place cytokinetic nodes around the cell equator the medial cortex to promote the ring assembly in cooperation with F-actin. Necessary to stabilize the mitotic spindle perpendicular to the axis of cell division. Also recruits the cdr2 kinase to the CR. In terms of biological role, in the nucleus, binds to the promoter regions of M-G1 transcribed genes to negatively regulate their expression. This is Anillin-related medial ring protein mid1 from Schizosaccharomyces pombe (strain 972 / ATCC 24843) (Fission yeast).